We begin with the raw amino-acid sequence, 1001 residues long: Ulvan lyase, long isoform (1001 aa).

The N-terminal stretch at 1-21 (MNGLKMLLFSTTLLTAFTLHA) is a signal peptide. Substrate is bound at residue 126–127 (SH). His127 acts as the Proton donor/acceptor in catalysis. Ca(2+) is bound by residues Asp189, Asp199, and Lys201. Substrate is bound by residues Tyr280 and Arg297. Ca(2+)-binding residues include Asp300, Asp303, and Tyr305. Tyr361 contacts substrate.

This sequence belongs to the polysaccharide lyase 24 family.

Functionally, ulvan lyase involved in ulvan degradation. Ulvan is the main polysaccharide component of the Ulvales (green seaweed) cell wall. It is composed of disaccharide building blocks comprising 3-sulfated rhamnose (Rha3S) linked to D-glucuronic acid (GlcA), L-iduronic acid (IduA), or D-xylose (Xyl). Ulvan lyase catalyzes preferentially the endolytic cleavage of the glycosidic bond between Rha3S and the uronic acid GlcA, but not IduA, producing oligosaccharides that have unsaturated 4-deoxy-L-threo-hex-4-enopyranosiduronic acid (deltaUA) at the non-reducing end. The most abundant end products in the degradation of the ulvan polysaccharide were deltaUA-Rha3S disaccharides and deltaUA-Rha3S-IduA-Rha3S and deltaUA-Rha3S-Xyl-Rha3S tetrasaccharides. The polypeptide is Ulvan lyase, long isoform (Pseudoalteromonas sp. (strain PLSV)).